Here is a 352-residue protein sequence, read N- to C-terminus: Carbohydrate sulfotransferase 11 (352 aa).

Residues 1-16 (MKPALLEVMRMNRICR) are Cytoplasmic-facing. Residues 17-37 (MVLATCLGSFILVIFYFQSML) form a helical; Signal-anchor for type II membrane protein membrane-spanning segment. Residues 38–352 (HPVMRRNPFG…YSVPNYLKLD (315 aa)) are Lumenal-facing. 3'-phosphoadenylyl sulfate is bound by residues 124–130 (PKVACTN) and 186–194 (REPFERLVS). 4 N-linked (GlcNAc...) asparagine glycosylation sites follow: N205, N223, N321, and N342.

The protein belongs to the sulfotransferase 2 family. Post-translationally, N-glycosylated; required for activity and stability.

It is found in the golgi apparatus membrane. The catalysed reaction is chondroitin beta-D-glucuronate + n 3'-phosphoadenylyl sulfate = chondroitin 4'-sulfate + n adenosine 3',5'-bisphosphate + n H(+). Catalyzes the transfer of sulfate to position 4 of the N-acetylgalactosamine (GalNAc) residue of chondroitin. Chondroitin sulfate constitutes the predominant proteoglycan present in cartilage and is distributed on the surfaces of many cells and extracellular matrices. Can also sulfate Gal residues in desulfated dermatan sulfate. Preferentially sulfates in GlcA-&gt;GalNAc unit than in IdoA-&gt;GalNAc unit. Does not form 4, 6-di-O-sulfated GalNAc when chondroitin sulfate C is used as an acceptor. This chain is Carbohydrate sulfotransferase 11 (Chst11), found in Rattus norvegicus (Rat).